We begin with the raw amino-acid sequence, 427 residues long: Trigger factor (427 aa).

Positions 163–248 (GDTVVIDFVG…IHEVKTKEVP (86 aa)) constitute a PPIase FKBP-type domain.

Belongs to the FKBP-type PPIase family. Tig subfamily.

It is found in the cytoplasm. The catalysed reaction is [protein]-peptidylproline (omega=180) = [protein]-peptidylproline (omega=0). Functionally, involved in protein export. Acts as a chaperone by maintaining the newly synthesized protein in an open conformation. Functions as a peptidyl-prolyl cis-trans isomerase. The protein is Trigger factor of Streptococcus pyogenes serotype M18 (strain MGAS8232).